We begin with the raw amino-acid sequence, 386 residues long: MRKEFLFTSESVTEGHPDKMADQISDAILDYIIERDPKARVACETLLSNGFCVIAGELKTTTYAPMQEIAREVIREIGYTDALYGFDYRSAGILNGVGEQSPDINQGVDREDGEIGAGDQGLMFGYACRETETLMPLPIFLSHKITEGLAKARKDGTLPFLRPDGKSQVTVRYVDGKPVGIDTIVVSTQHAPDVSQERLRDAVIEEIVYKVLPKEYLGDDIRFFVNPTGKFVIGGPQGDAGLTGRKIIVDSYGGSCPHGGGAFSGKDPSKVDRSGAYAARYVAKNLVASGVCDKATIQIAYAIGVVEPVSILVDTHGTGKVEDDQLETCVRQLFRLTPKGIIESLDLLRPIYKKTASYGHFGRELPEFSWEKTDKAELIKNYFNLK.

Histidine 16 serves as a coordination point for ATP. Aspartate 18 contacts Mg(2+). A K(+)-binding site is contributed by glutamate 44. The L-methionine site is built by glutamate 57 and glutamine 100. Positions 100 to 110 are flexible loop; sequence QSPDINQGVDR. ATP is bound by residues 164–166, 230–231, aspartate 239, 245–246, alanine 262, and lysine 266; these read DGK, KF, and RK. Residue aspartate 239 participates in L-methionine binding. L-methionine is bound at residue lysine 270.

It belongs to the AdoMet synthase family. In terms of assembly, homotetramer; dimer of dimers. Mg(2+) serves as cofactor. K(+) is required as a cofactor.

It is found in the cytoplasm. The enzyme catalyses L-methionine + ATP + H2O = S-adenosyl-L-methionine + phosphate + diphosphate. The protein operates within amino-acid biosynthesis; S-adenosyl-L-methionine biosynthesis; S-adenosyl-L-methionine from L-methionine: step 1/1. Functionally, catalyzes the formation of S-adenosylmethionine (AdoMet) from methionine and ATP. The overall synthetic reaction is composed of two sequential steps, AdoMet formation and the subsequent tripolyphosphate hydrolysis which occurs prior to release of AdoMet from the enzyme. The chain is S-adenosylmethionine synthase from Wolinella succinogenes (strain ATCC 29543 / DSM 1740 / CCUG 13145 / JCM 31913 / LMG 7466 / NCTC 11488 / FDC 602W) (Vibrio succinogenes).